The following is a 205-amino-acid chain: G-protein coupled receptor (205 aa).

5 helical membrane-spanning segments follow: residues 40-60 (GITL…MILY), 71-91 (FYVI…FFMT), 107-127 (LVYF…AIIA), 151-171 (IGIL…FVQI), and 185-205 (LSSP…SFIW). The cysteines at positions 105 and 181 are disulfide-linked.

This sequence belongs to the G-protein coupled receptor 1 family.

Its subcellular location is the host membrane. The chain is G-protein coupled receptor (U12) from Human herpesvirus 6B (strain Z29) (HHV-6 variant B).